The sequence spans 787 residues: LPS-assembly protein LptD (787 aa).

The first 24 residues, 1–24 (MKKSFPTLLATLVWSALYSQHALA), serve as a signal peptide directing secretion.

It belongs to the LptD family. Component of the lipopolysaccharide transport and assembly complex. Interacts with LptE and LptA.

The protein resides in the cell outer membrane. In terms of biological role, together with LptE, is involved in the assembly of lipopolysaccharide (LPS) at the surface of the outer membrane. This chain is LPS-assembly protein LptD, found in Pectobacterium atrosepticum (strain SCRI 1043 / ATCC BAA-672) (Erwinia carotovora subsp. atroseptica).